The primary structure comprises 169 residues: Transcription antitermination protein NusB (169 aa).

Positions 150-169 (AAATSRRTETAGGESNDAGS) are disordered.

The protein belongs to the NusB family.

In terms of biological role, involved in transcription antitermination. Required for transcription of ribosomal RNA (rRNA) genes. Binds specifically to the boxA antiterminator sequence of the ribosomal RNA (rrn) operons. The polypeptide is Transcription antitermination protein NusB (Rhodococcus jostii (strain RHA1)).